A 129-amino-acid chain; its full sequence is Small ribosomal subunit protein uS11 (129 aa).

The segment at 107-129 (IEDVTPVPHDSIRGKGGRRGRRV) is disordered.

This sequence belongs to the universal ribosomal protein uS11 family. In terms of assembly, part of the 30S ribosomal subunit.

Functionally, located on the platform of the 30S subunit. The sequence is that of Small ribosomal subunit protein uS11 from Methanoculleus marisnigri (strain ATCC 35101 / DSM 1498 / JR1).